An 878-amino-acid chain; its full sequence is DNA gyrase subunit A (878 aa).

The region spanning 34-533 (LPDVRDGLKP…NSADINIEDL (500 aa)) is the Topo IIA-type catalytic domain. Residue Y122 is the O-(5'-phospho-DNA)-tyrosine intermediate of the active site. The GyrA-box signature appears at 560–566 (QRRGGKG). A disordered region spans residues 844-878 (DDEELDAIDGSVAEGDEDIAPEAESDDDVADDADE). Residues 857 to 878 (EGDEDIAPEAESDDDVADDADE) show a composition bias toward acidic residues.

The protein belongs to the type II topoisomerase GyrA/ParC subunit family. As to quaternary structure, heterotetramer, composed of two GyrA and two GyrB chains. In the heterotetramer, GyrA contains the active site tyrosine that forms a transient covalent intermediate with DNA, while GyrB binds cofactors and catalyzes ATP hydrolysis.

Its subcellular location is the cytoplasm. The catalysed reaction is ATP-dependent breakage, passage and rejoining of double-stranded DNA.. Its function is as follows. A type II topoisomerase that negatively supercoils closed circular double-stranded (ds) DNA in an ATP-dependent manner to modulate DNA topology and maintain chromosomes in an underwound state, and also catalyzes the interconversion of other topological isomers of double-stranded DNA rings, including catenanes and knotted rings. Replenishes negative supercoiling downstream of highly transcribed genes to help control overall chromosomal supercoiling density. E.coli makes 15% more negative supercoils in pBR322 plasmid DNA than S.typhimurium; the S.typhimurium GyrB subunit is toxic in E.coli, while the E.coli copy can be expressed in S.typhimurium even though the 2 subunits have 777/804 residues identical. Functionally, negative supercoiling favors strand separation, and DNA replication, transcription, recombination and repair, all of which involve strand separation. Type II topoisomerases break and join 2 DNA strands simultaneously in an ATP-dependent manner. This is DNA gyrase subunit A from Salmonella typhimurium (strain LT2 / SGSC1412 / ATCC 700720).